Reading from the N-terminus, the 173-residue chain is MAEKRNIFLVGPMGAGKSTIGRQLAQQLNMEFFDSDQEIERRTGADVGWVFDVEGEEGFRDREEKVINELTEKQGIVLATGGGSVKSRETRNRLSARGVVVYLETTIEKQLARTQRDKKRPLLQVETPPREVLEALAKERNPLYEEIADVTIRTDEQSAKVVANQIINMLESN.

14–19 (GAGKST) serves as a coordination point for ATP. Position 18 (serine 18) interacts with Mg(2+). 3 residues coordinate substrate: aspartate 36, arginine 60, and glycine 82. Arginine 120 is a binding site for ATP. Arginine 140 is a substrate binding site. Glutamine 157 contacts ATP.

This sequence belongs to the shikimate kinase family. As to quaternary structure, monomer. Mg(2+) is required as a cofactor.

It localises to the cytoplasm. It carries out the reaction shikimate + ATP = 3-phosphoshikimate + ADP + H(+). Its pathway is metabolic intermediate biosynthesis; chorismate biosynthesis; chorismate from D-erythrose 4-phosphate and phosphoenolpyruvate: step 5/7. Functionally, catalyzes the specific phosphorylation of the 3-hydroxyl group of shikimic acid using ATP as a cosubstrate. In Pectobacterium atrosepticum (strain SCRI 1043 / ATCC BAA-672) (Erwinia carotovora subsp. atroseptica), this protein is Shikimate kinase 1.